The following is a 145-amino-acid chain: Superoxide dismutase [Mn/Fe] (145 aa).

Fe(3+) contacts are provided by histidine 10 and histidine 64. Residues histidine 10 and histidine 64 each contribute to the Mn(2+) site.

Belongs to the iron/manganese superoxide dismutase family. Mn(2+) is required as a cofactor. Requires Fe(3+) as cofactor.

It catalyses the reaction 2 superoxide + 2 H(+) = H2O2 + O2. Functionally, destroys superoxide anion radicals which are normally produced within the cells and which are toxic to biological systems. Catalyzes the dismutation of superoxide anion radicals into O2 and H2O2 by successive reduction and oxidation of the transition metal ion at the active site. The protein is Superoxide dismutase [Mn/Fe] (sodA) of Streptococcus acidominimus.